A 273-amino-acid polypeptide reads, in one-letter code: 2,3,4,5-tetrahydropyridine-2,6-dicarboxylate N-succinyltransferase (273 aa).

Arg105 and Asp142 together coordinate substrate.

Belongs to the transferase hexapeptide repeat family. In terms of assembly, homotrimer.

It localises to the cytoplasm. It catalyses the reaction (S)-2,3,4,5-tetrahydrodipicolinate + succinyl-CoA + H2O = (S)-2-succinylamino-6-oxoheptanedioate + CoA. Its pathway is amino-acid biosynthesis; L-lysine biosynthesis via DAP pathway; LL-2,6-diaminopimelate from (S)-tetrahydrodipicolinate (succinylase route): step 1/3. The sequence is that of 2,3,4,5-tetrahydropyridine-2,6-dicarboxylate N-succinyltransferase from Bordetella bronchiseptica (strain ATCC BAA-588 / NCTC 13252 / RB50) (Alcaligenes bronchisepticus).